The primary structure comprises 95 residues: Bombyxin C-2 (95 aa).

An N-terminal signal peptide occupies residues 1 to 19; it reads MKLVILLVVVSAMLVLGGA. Gln20 carries the post-translational modification Pyrrolidone carboxylic acid. 3 disulfides stabilise this stretch: Cys27/Cys76, Cys39/Cys89, and Cys75/Cys80. Positions 47-67 are cleaved as a propeptide — c peptide like; that stretch reads SGSQYAGYGWPWLPPFSSSRG.

Belongs to the insulin family. Heterodimer of a B chain and an A chain linked by two disulfide bonds.

Its subcellular location is the secreted. Functionally, brain peptide responsible for activation of prothoracic glands to produce ecdysone in insects. In Bombyx mori (Silk moth), this protein is Bombyxin C-2 (BBXC2).